The chain runs to 370 residues: Translocating chain-associated membrane protein 2 (370 aa).

At 1–22 (MAFRRRTKSYPLFSQEFIIHNH) the chain is on the cytoplasmic side. The helical transmembrane segment at 23-43 (ADIGFCLVLCVLIGLMFEVTA) threads the bilayer. At 44 to 75 (KTAFLFILPQYNISVPTADSETVHYHYGPKDL) the chain is on the extracellular side. An N-linked (GlcNAc...) asparagine glycan is attached at N55. A helical transmembrane segment spans residues 76-96 (VTILFYVVITIIFHAVVQEYI). At 97 to 119 (LDKISKRLHLSKVKHSKFNESGQ) the chain is on the cytoplasmic side. The region spanning 112-321 (SKFNESGQLL…HSQLRHWREY (210 aa)) is the TLC domain. The helical transmembrane segment at 120–140 (LLVFHLSAVAWCFYVIVTEGY) threads the bilayer. Over 141–159 (LTNPRSLWEDYPHVYLSFQ) the chain is Extracellular. A helical transmembrane segment spans residues 160–180 (VKFFYLGQLAYWLHSLPELYF). Topologically, residues 181–191 (QKVRKEEVPRQ) are cytoplasmic. A helical membrane pass occupies residues 192–209 (LQYICLYLLHITGAYLLN). Residues 210-214 (LSRLG) are Extracellular-facing. Residues 215–235 (LILLLLQYSTEALFHMARLFH) form a helical membrane-spanning segment. Over 236–250 (FADENNERLFNAWAA) the chain is Cytoplasmic. The chain crosses the membrane as a helical span at residues 251 to 271 (VFGVTRLFILTLAVLTIGFGL). The Extracellular segment spans residues 272–287 (ARVENQVFDPEKGNFN). A helical membrane pass occupies residues 288 to 308 (TLPCRLGMLLLVCVAQAWLMW). Over 309–370 (RFIHSQLRHW…SSRTKKLKSP (62 aa)) the chain is Cytoplasmic. Residues 332-370 (SAVPRPPAKLLKREPGYHENGVVKAENGTSSRTKKLKSP) form a disordered region.

This sequence belongs to the TRAM family. As to quaternary structure, interacts with COL1A1. Interacts with SERCA2B.

The protein resides in the membrane. In terms of biological role, necessary for collagen type I synthesis. May couple the activity of the ER Ca(2+) pump SERCA2B with the activity of the translocon. This coupling may increase the local Ca(2+) concentration at the site of collagen synthesis, and a high Ca(2+) concentration may be necessary for the function of molecular chaperones involved in collagen folding. Required for proper insertion of the first transmembrane helix N-terminus of TM4SF20 into the ER lumen, may act as a ceramide sensor for regulated alternative translocation (RAT). This is Translocating chain-associated membrane protein 2 (Tram2) from Mus musculus (Mouse).